A 498-amino-acid chain; its full sequence is Diacylglycerol O-acyltransferase 1 (498 aa).

Residues 1-66 (MGDRGGAGSS…AHTRDKDRQT (66 aa)) are disordered. Residues 1-92 (MGDRGGAGSS…SLFSSDSGFS (92 aa)) lie on the Cytoplasmic side of the membrane. The tract at residues 1–96 (MGDRGGAGSS…SDSGFSNYRG (96 aa)) is involved in homomerization. Ser-20 is subject to Phosphoserine. Basic and acidic residues predominate over residues 58–68 (HTRDKDRQTSV). Residues 93–127 (NYRGILNWCVVMLILSNARLSLENLIKYGILVDPI) traverse the membrane as a helical segment. Residues 128-139 (QVVSLFLKDPYS) are Lumenal-facing. The interval 128–139 (QVVSLFLKDPYS) is extracellular loop 1 (EL1). A helical membrane pass occupies residues 140–165 (WPAPCLIIASNIFIVATFQIEKRLSV). Residues 140 to 498 (WPAPCLIIAS…VLNYDAPVGA (359 aa)) form an MBOAT fold region. Residues 166-170 (GALTE) lie on the Cytoplasmic side of the membrane. Residues 171–193 (QMGLLLHVVNLATIICFPAAVAL) traverse the membrane as a helical segment. Residues 194-200 (LVESITP) are Lumenal-facing. Residues 201-232 (VGSLFALASYSIIFLKLSSYRDVNLWCRQRRV) traverse the membrane as a helical segment. Residues 233-284 (KAKAVSAGKKVSGAAAQNTVSYPDNLTYRDLYYFIFAPTLCYELNFPRSPRI) lie on the Cytoplasmic side of the membrane. The segment at 235-287 (KAVSAGKKVSGAAAQNTVSYPDNLTYRDLYYFIFAPTLCYELNFPRSPRIRKR) is intracellular loop 1 (IL1). Residues 285 to 319 (RKRFLLRRVLEMLFFTQLQVGLIQQWMVPTIQNSM) traverse the membrane as a helical segment. Topologically, residues 320–326 (KPFKDMD) are lumenal. The chain crosses the membrane as a helical span at residues 327 to 364 (YSRIIERLLKLAVPNHLIWLIFFYWLFHSCLNAVAELL). Over 365–410 (QFGDREFYRDWWNAESVTYFWQNWNIPVHKWCIRHFYKPMLRLGSN) the chain is Cytoplasmic. The interval 365–410 (QFGDREFYRDWWNAESVTYFWQNWNIPVHKWCIRHFYKPMLRLGSN) is intracellular loop 2 (IL2). Residues 371-377 (FYRDWWN) carry the FYXDWWN motif motif. An acyl-CoA-binding positions include 385 to 393 (WQNWNIPVH), Tyr-401, and Arg-415. Positions 391–405 (PVHKWCIRHFYKPML) are amphipathic helix (AH). A helical transmembrane segment spans residues 411–431 (KWMARTGVFWASAFFHEYLVS). His-426 is an active-site residue. Residues 432 to 439 (IPLRMFRL) lie on the Lumenal side of the membrane. A helical transmembrane segment spans residues 440–458 (WAFTAMMAQVPLAWIVNRF). Residues 459–460 (FQ) lie on the Cytoplasmic side of the membrane. Residues 461 to 492 (GNYGNAAVWVTLIIGQPVAVLMYVHDYYVLNY) form a helical membrane-spanning segment. Tyr-488 lines the an acyl-CoA pocket. The Lumenal segment spans residues 493 to 498 (DAPVGA).

This sequence belongs to the membrane-bound acyltransferase family. Sterol o-acyltransferase subfamily. In terms of assembly, homodimer or homotetramer; both forms have similar enzymatic activities.

The protein resides in the endoplasmic reticulum membrane. It carries out the reaction an acyl-CoA + a 1,2-diacyl-sn-glycerol = a triacyl-sn-glycerol + CoA. The catalysed reaction is all-trans-retinol + an acyl-CoA = an all-trans-retinyl ester + CoA. The enzyme catalyses 2-(9Z-octadecenoyl)-glycerol + (9Z)-octadecenoyl-CoA = 1,2-di-(9Z-octadecenoyl)-sn-glycerol + CoA. It catalyses the reaction 1,2-di-(9Z-octadecenoyl)-sn-glycerol + (9Z)-octadecenoyl-CoA = 1,2,3-tri-(9Z-octadecenoyl)-glycerol + CoA. It carries out the reaction all-trans-retinol + hexadecanoyl-CoA = all-trans-retinyl hexadecanoate + CoA. The catalysed reaction is 1-O-(9Z-octadecenyl)-glycerol + (9Z)-octadecenoyl-CoA = 1-O-(9Z-octadecyl)-3-(9Z-octadecenoyl)-glycerol + CoA. The enzyme catalyses 1-O-(9Z-octadecyl)-3-(9Z-octadecenoyl)-glycerol + (9Z)-octadecenoyl-CoA = 1-O-(9Z-octadecenyl)-2,3-di-(9Z-octadecenoyl)glycerol + CoA. It catalyses the reaction 1-(9Z-octadecenoyl)-glycerol + (9Z)-octadecenoyl-CoA = 1,2-di-(9Z-octadecenoyl)-glycerol + CoA. It carries out the reaction 1,2-di-(9Z-octadecenoyl)-glycerol + (9Z)-octadecenoate + H(+) = 1,2,3-tri-(9Z-octadecenoyl)-glycerol + H2O. The catalysed reaction is 1-octadecanoyl-2-(5Z,8Z,11Z,14Z-eicosatetraenoyl)-sn-glycerol + (9Z)-octadecenoyl-CoA = 1-octadecanoyl-2-(5Z,8Z,11Z,14Z)-eicosatetraenoyl-3-(9Z)-octadecenoyl-sn-glycerol + CoA. The enzyme catalyses hexadecane-1,2-diol + 2 hexadecanoyl-CoA = 1,2-O,O-dihexadecanoyl-1,2-hexadecanediol + 2 CoA. It catalyses the reaction hexadecane-1,2-diol + hexadecanoyl-CoA = 2-hydroxyhexadecyl hexadecanoate + CoA. It carries out the reaction 2-(9Z-octadecenoyl)-glycerol + hexadecanoyl-CoA = 1-hexadecanoyl-2-(9Z-octadecenoyl)-sn-glycerol + CoA. The catalysed reaction is 1,2-di-(9Z-octadecenoyl)-sn-glycerol + hexadecanoyl-CoA = 1,2-di-(9Z)-octadecenoyl-3-hexadecanoyl-sn-glycerol + CoA. The enzyme catalyses hexadecan-1-ol + hexadecanoyl-CoA = hexadecanyl hexadecanoate + CoA. It catalyses the reaction 13-cis-retinol + hexadecanoyl-CoA = 13-cis-retinyl hexadecanoate + CoA. It carries out the reaction 1,3-di-(9Z-octadecenoyl)-glycerol + (9Z)-octadecenoyl-CoA = 1,2,3-tri-(9Z-octadecenoyl)-glycerol + CoA. The catalysed reaction is 2,3-di-(9Z)-octadecenoyl-sn-glycerol + (9Z)-octadecenoyl-CoA = 1,2,3-tri-(9Z-octadecenoyl)-glycerol + CoA. It functions in the pathway lipid metabolism; glycerolipid metabolism. Its function is as follows. Catalyzes the terminal and only committed step in triacylglycerol synthesis by using diacylglycerol and fatty acyl CoA as substrates. Highly expressed in epithelial cells of the small intestine and its activity is essential for the absorption of dietary fats. In liver, plays a role in esterifying exogenous fatty acids to glycerol, and is required to synthesize fat for storage. Also present in female mammary glands, where it produces fat in the milk. May be involved in VLDL (very low density lipoprotein) assembly. In contrast to DGAT2 it is not essential for survival. Functions as the major acyl-CoA retinol acyltransferase (ARAT) in the skin, where it acts to maintain retinoid homeostasis and prevent retinoid toxicity leading to skin and hair disorders. Exhibits additional acyltransferase activities, includin acyl CoA:monoacylglycerol acyltransferase (MGAT), wax monoester and wax diester synthases. Also able to use 1-monoalkylglycerol (1-MAkG) as an acyl acceptor for the synthesis of monoalkyl-monoacylglycerol (MAMAG). This Rattus norvegicus (Rat) protein is Diacylglycerol O-acyltransferase 1.